A 458-amino-acid chain; its full sequence is Probable M18 family aminopeptidase 1 (458 aa).

3 residues coordinate Zn(2+): H95, H170, and H434.

The protein belongs to the peptidase M18 family. The cofactor is Zn(2+).

This Borreliella burgdorferi (strain ATCC 35210 / DSM 4680 / CIP 102532 / B31) (Borrelia burgdorferi) protein is Probable M18 family aminopeptidase 1 (apeA).